We begin with the raw amino-acid sequence, 459 residues long: Pup--protein ligase (459 aa).

Position 9 (E9) interacts with Mg(2+). Residue R54 participates in ATP binding. Mg(2+) is bound at residue Y56. D58 (proton acceptor) is an active-site residue. E64 serves as a coordination point for Mg(2+). ATP is bound by residues T67 and W421.

The protein belongs to the Pup ligase/Pup deamidase family. Pup-conjugating enzyme subfamily.

It carries out the reaction ATP + [prokaryotic ubiquitin-like protein]-L-glutamate + [protein]-L-lysine = ADP + phosphate + N(6)-([prokaryotic ubiquitin-like protein]-gamma-L-glutamyl)-[protein]-L-lysine.. Its pathway is protein degradation; proteasomal Pup-dependent pathway. The protein operates within protein modification; protein pupylation. Its function is as follows. Catalyzes the covalent attachment of the prokaryotic ubiquitin-like protein modifier Pup to the proteasomal substrate proteins, thereby targeting them for proteasomal degradation. This tagging system is termed pupylation. The ligation reaction involves the side-chain carboxylate of the C-terminal glutamate of Pup and the side-chain amino group of a substrate lysine. This is Pup--protein ligase from Jonesia denitrificans (strain ATCC 14870 / DSM 20603 / BCRC 15368 / CIP 55.134 / JCM 11481 / NBRC 15587 / NCTC 10816 / Prevot 55134) (Listeria denitrificans).